Consider the following 657-residue polypeptide: Leishmanolysin (657 aa).

An N-terminal signal peptide occupies residues 1–41; sequence MSVDSSSSSTHRRRCVAARLVRLAAAGAAVTVAVGTAAAWA. Positions 42–102 are cleaved as a propeptide — activation peptide; that stretch reads HAGALQHRCI…DPRPGSAPTV (61 aa). Residues 44–611 are Extracellular-facing; it reads GALQHRCIHD…DRMVGLATAA (568 aa). N107 carries an N-linked (GlcNAc...) asparagine glycan. Cystine bridges form between C127–C144 and C193–C232. A Zn(2+)-binding site is contributed by H266. E267 is a catalytic residue. Residue H270 coordinates Zn(2+). N302 carries N-linked (GlcNAc...) asparagine glycosylation. Disulfide bonds link C316–C388, C395–C458, C408–C427, C417–C492, C469–C513, C518–C568, and C538–C561. Residue H336 participates in Zn(2+) binding. Residues N399, N409, N445, N466, and N501 are each glycosylated (N-linked (GlcNAc...) asparagine). The chain crosses the membrane as a helical span at residues 612–632; that stretch reads TVLLGMVLSLMALVVVWLLLV. Topologically, residues 633-657 are cytoplasmic; the sequence is SCPWWCCKLGGPPASVTPACSPETE.

Belongs to the peptidase M8 family. The cofactor is Zn(2+).

Its subcellular location is the membrane. The catalysed reaction is Preference for hydrophobic residues at P1 and P1' and basic residues at P2' and P3'. A model nonapeptide is cleaved at -Ala-Tyr-|-Leu-Lys-Lys-.. Functionally, has an integral role during the infection of macrophages in the mammalian host. The chain is Leishmanolysin (mspC) from Leishmania tropica.